The chain runs to 320 residues: Fructose-1,6-bisphosphatase class 1 (320 aa).

Positions 105, 124, 126, and 127 each coordinate Mg(2+). Substrate-binding positions include 127–130, Tyr233, and Lys263; that span reads DGSS. Glu269 is a binding site for Mg(2+).

It belongs to the FBPase class 1 family. Homotetramer. The cofactor is Mg(2+).

Its subcellular location is the cytoplasm. The catalysed reaction is beta-D-fructose 1,6-bisphosphate + H2O = beta-D-fructose 6-phosphate + phosphate. Its pathway is carbohydrate biosynthesis; gluconeogenesis. This chain is Fructose-1,6-bisphosphatase class 1, found in Methanocorpusculum labreanum (strain ATCC 43576 / DSM 4855 / Z).